The sequence spans 324 residues: Glyoxylate/hydroxypyruvate reductase B (324 aa).

Active-site residues include Arg-237 and Glu-266. His-285 acts as the Proton donor in catalysis.

The protein belongs to the D-isomer specific 2-hydroxyacid dehydrogenase family. GhrB subfamily. Homodimer.

The protein resides in the cytoplasm. The enzyme catalyses glycolate + NADP(+) = glyoxylate + NADPH + H(+). The catalysed reaction is (R)-glycerate + NAD(+) = 3-hydroxypyruvate + NADH + H(+). It catalyses the reaction (R)-glycerate + NADP(+) = 3-hydroxypyruvate + NADPH + H(+). Its function is as follows. Catalyzes the NADPH-dependent reduction of glyoxylate and hydroxypyruvate into glycolate and glycerate, respectively. This Cronobacter sakazakii (strain ATCC BAA-894) (Enterobacter sakazakii) protein is Glyoxylate/hydroxypyruvate reductase B.